The following is a 147-amino-acid chain: Hemoglobin subunit gamma-1 (147 aa).

Residue Gly2 is modified to N-acetylglycine; in form Hb F1. The Globin domain occupies 3 to 147 (HFTEEDKATI…VASALSSRYH (145 aa)). A Phosphothreonine modification is found at Thr13. Ser45, Ser51, and Ser53 each carry phosphoserine. The residue at position 60 (Lys60) is an N6-acetyllysine. His64 is a binding site for heme b. Lys83 is subject to N6-acetyllysine. Residue His93 coordinates heme b. Position 94 is an S-nitrosocysteine (Cys94). A Phosphoserine modification is found at Ser140.

Belongs to the globin family. Heterotetramer of two alpha chains and two gamma chains in fetal hemoglobin (Hb F). In the case of deletions affecting one or more of the alpha chains, the excess gamma chains form homotetramers that exhibit neither Bohr effect nor heme-heme cooperativity (hemoglobin Bart's). In terms of processing, acetylation of Gly-2 converts Hb F to the minor Hb F1. Red blood cells.

In terms of biological role, gamma chains make up the fetal hemoglobin F, in combination with alpha chains. In Homo sapiens (Human), this protein is Hemoglobin subunit gamma-1 (HBG1).